Reading from the N-terminus, the 387-residue chain is Probable 1-alkyl-2-acetylglycerophosphocholine esterase (387 aa).

A signal peptide spans 1–17 (MLVQGTIICALVANAIA). N-linked (GlcNAc...) asparagine glycosylation is found at Asn51 and Asn141. Residue Ser227 is the Nucleophile of the active site. Residue Asp250 is the Charge relay system of the active site. N-linked (GlcNAc...) asparagine glycosylation occurs at Asn283. His313 serves as the catalytic Charge relay system.

The protein belongs to the AB hydrolase superfamily. Lipase family.

The protein localises to the secreted. The catalysed reaction is a 1-O-alkyl-2-acetyl-sn-glycero-3-phosphocholine + H2O = a 1-O-alkyl-sn-glycero-3-phosphocholine + acetate + H(+). In Arthroderma benhamiae (strain ATCC MYA-4681 / CBS 112371) (Trichophyton mentagrophytes), this protein is Probable 1-alkyl-2-acetylglycerophosphocholine esterase.